An 807-amino-acid chain; its full sequence is Leucine-rich repeat-containing protein 41 (807 aa).

Residues Ala-45–Val-54 form an interaction with Elongin BC complex region. Phosphoserine is present on residues Ser-155, Ser-276, and Ser-326. Disordered regions lie at residues Ala-269 to Arg-290, Thr-304 to Gly-335, and Ala-349 to Ala-403. Thr-327 carries the phosphothreonine modification. Over residues Thr-352–Lys-381 the composition is skewed to low complexity. Phosphoserine is present on Ser-368. Basic residues predominate over residues Pro-382–Arg-396. LRR repeat units follow at residues Trp-482–Leu-502, Ala-513–Leu-525, Phe-526–Ile-550, Ser-608–Gln-632, Asn-638–Leu-661, Asn-696–Glu-723, and Ser-726–Phe-747.

As to quaternary structure, part of an E3 ubiquitin-protein ligase complex with Elongin BC (ELOB and ELOC), RBX1 and CUL5. Component of a probable ECS(LRRC41) complex which contains CUL5, RNF7/RBX2, Elongin BC and LRRC41. Interacts with CUL5, RNF7, ELOB and ELOC.

The protein operates within protein modification; protein ubiquitination. Its function is as follows. Probable substrate recognition component of an ECS (Elongin BC-CUL2/5-SOCS-box protein) E3 ubiquitin ligase complex which mediates the ubiquitination and subsequent proteasomal degradation of target proteins. The sequence is that of Leucine-rich repeat-containing protein 41 (Lrrc41) from Mus musculus (Mouse).